A 183-amino-acid chain; its full sequence is Peptidyl-tRNA hydrolase (183 aa).

Y15 provides a ligand contact to tRNA. The Proton acceptor role is filled by H20. TRNA-binding residues include Y67 and N69.

It belongs to the PTH family. As to quaternary structure, monomer.

It is found in the cytoplasm. The enzyme catalyses an N-acyl-L-alpha-aminoacyl-tRNA + H2O = an N-acyl-L-amino acid + a tRNA + H(+). In terms of biological role, hydrolyzes ribosome-free peptidyl-tRNAs (with 1 or more amino acids incorporated), which drop off the ribosome during protein synthesis, or as a result of ribosome stalling. Functionally, catalyzes the release of premature peptidyl moieties from peptidyl-tRNA molecules trapped in stalled 50S ribosomal subunits, and thus maintains levels of free tRNAs and 50S ribosomes. This chain is Peptidyl-tRNA hydrolase, found in Chlamydia abortus (strain DSM 27085 / S26/3) (Chlamydophila abortus).